Consider the following 268-residue polypeptide: Phosphatidylglycerol--prolipoprotein diacylglyceryl transferase (268 aa).

7 helical membrane-spanning segments follow: residues 10–30, 56–76, 92–112, 120–140, 174–194, 202–222, and 236–256; these read VALA…LIGI, LVFW…VLFY, WKGG…ALWF, FFEL…AGRI, PSQL…LWLF, MAVS…VEFV, and WLTM…GLIW. Position 139 (Arg139) interacts with a 1,2-diacyl-sn-glycero-3-phospho-(1'-sn-glycerol).

The protein belongs to the Lgt family.

Its subcellular location is the cell inner membrane. The enzyme catalyses L-cysteinyl-[prolipoprotein] + a 1,2-diacyl-sn-glycero-3-phospho-(1'-sn-glycerol) = an S-1,2-diacyl-sn-glyceryl-L-cysteinyl-[prolipoprotein] + sn-glycerol 1-phosphate + H(+). It functions in the pathway protein modification; lipoprotein biosynthesis (diacylglyceryl transfer). In terms of biological role, catalyzes the transfer of the diacylglyceryl group from phosphatidylglycerol to the sulfhydryl group of the N-terminal cysteine of a prolipoprotein, the first step in the formation of mature lipoproteins. The protein is Phosphatidylglycerol--prolipoprotein diacylglyceryl transferase of Pseudomonas putida (strain ATCC 700007 / DSM 6899 / JCM 31910 / BCRC 17059 / LMG 24140 / F1).